Reading from the N-terminus, the 320-residue chain is Lipoyl synthase (320 aa).

[4Fe-4S] cluster contacts are provided by Cys-66, Cys-71, Cys-77, Cys-92, Cys-96, Cys-99, and Ser-306. The Radical SAM core domain maps to 77 to 295 (CFGHGTATFM…AEIGYAMGFS (219 aa)).

The protein belongs to the radical SAM superfamily. Lipoyl synthase family. It depends on [4Fe-4S] cluster as a cofactor.

It localises to the cytoplasm. The enzyme catalyses [[Fe-S] cluster scaffold protein carrying a second [4Fe-4S](2+) cluster] + N(6)-octanoyl-L-lysyl-[protein] + 2 oxidized [2Fe-2S]-[ferredoxin] + 2 S-adenosyl-L-methionine + 4 H(+) = [[Fe-S] cluster scaffold protein] + N(6)-[(R)-dihydrolipoyl]-L-lysyl-[protein] + 4 Fe(3+) + 2 hydrogen sulfide + 2 5'-deoxyadenosine + 2 L-methionine + 2 reduced [2Fe-2S]-[ferredoxin]. It participates in protein modification; protein lipoylation via endogenous pathway; protein N(6)-(lipoyl)lysine from octanoyl-[acyl-carrier-protein]: step 2/2. Catalyzes the radical-mediated insertion of two sulfur atoms into the C-6 and C-8 positions of the octanoyl moiety bound to the lipoyl domains of lipoate-dependent enzymes, thereby converting the octanoylated domains into lipoylated derivatives. The chain is Lipoyl synthase from Thioalkalivibrio sulfidiphilus (strain HL-EbGR7).